The sequence spans 430 residues: Inactive metallocarboxypeptidase ECM14 (430 aa).

A signal peptide spans 1 to 24; sequence MLHMNSLWGCFLFVLLAVTGAVQG. A propeptide spanning residues 25 to 105 is cleaved from the precursor; sequence LQEDYSEYAV…TLPTSQMMAR (81 aa). The N-linked (GlcNAc...) asparagine glycan is linked to Asn41. Positions 120–425 constitute a Peptidase M14 domain; it reads EYRDLDTIYM…AALKYFCDFL (306 aa). Zn(2+)-binding residues include His182 and Glu185. Substrate is bound by residues 182–185, Arg240, and 257–258; these read HARE and DH. The cysteines at positions 251 and 272 are disulfide-linked. N-linked (GlcNAc...) asparagine glycosylation is present at Asn295. His310 provides a ligand contact to Zn(2+). 311–312 is a substrate binding site; it reads SY.

Belongs to the peptidase M14 family. It depends on Zn(2+) as a cofactor. In terms of processing, N-glycosylated.

The protein localises to the vacuole. It localises to the secreted. Functionally, inactive carboxypeptidase that may play a role in cell wall organization and biogenesis. The sequence is that of Inactive metallocarboxypeptidase ECM14 from Saccharomyces cerevisiae (strain ATCC 204508 / S288c) (Baker's yeast).